We begin with the raw amino-acid sequence, 315 residues long: Methenyltetrahydromethanopterin cyclohydrolase (315 aa).

The protein belongs to the MCH family.

It localises to the cytoplasm. It catalyses the reaction 5,10-methenyl-5,6,7,8-tetrahydromethanopterin + H2O = N(5)-formyl-5,6,7,8-tetrahydromethanopterin + H(+). The protein operates within one-carbon metabolism; methanogenesis from CO(2); 5,10-methenyl-5,6,7,8-tetrahydromethanopterin from CO(2): step 3/3. Its function is as follows. Catalyzes the reversible interconversion of 5-formyl-H(4)MPT to methenyl-H(4)MPT(+). In Methanosphaerula palustris (strain ATCC BAA-1556 / DSM 19958 / E1-9c), this protein is Methenyltetrahydromethanopterin cyclohydrolase.